Consider the following 683-residue polypeptide: MSSESSKKRKPKVIRSDGAPAEGKRNRSDTEQEGKYYSEEAEVDLRDPGRDYELYKYTCQELQRLMAEIQDLKSRGGKDVAIEIEERRIQSCVHFMTLKKLNRLAHIRLKKGRDQTHEAKQKVDAYHLQLQNLLYEVMHLQKEITKCLEFKSKHEEIDLVSLEEFYKEAPPDISKAEVTMGDPHQQTLARLDWELEQRKRLAEKYRECLSNKEKILKEIEVKKEYLSSLQPRLNSIMQASLPVQEYLFMPFDQAHKQYETARHLPPPLYVLFVQATAYGQACDKTLSVAIEGSVDEAKALFKPPEDSQDDESDSDAEEEQTTKRRRPTLGVQLDDKRKEMLKRHPLSVMLDLKCKDDSVLHLTFYYLMNLNIMTVKAKVTTAMELITPISAGDLLSPDSVLSCLYPGDHGKKTPNPANQYQFDKVGILTLSDYVLELGHPYLWVQKLGGLHFPKEQPQQTVIADHSLSASHMETTMKLLKTRVQSRLALHKQFASLEHGIVPVTSDCQYLFPAKVVSRLVKWVTVAHEDYMELHFTKDIVDAGLAGDTNLYYMALIERGTAKLQAAVVLNPGYSSIPPVFQLCLNWKGEKTNSNDDNIRAMEGEVNVCYKELCGPWPSHQLLTNQLQRLCVLLDVYLETESHDDSVEGPKEFPQEKMCLRLFRGPSRMKPFKYNHPQGFFSHR.

The disordered stretch occupies residues 1–42 (MSSESSKKRKPKVIRSDGAPAEGKRNRSDTEQEGKYYSEEAE). Position 2 is an N-acetylserine (serine 2). Residues 2–144 (SSESSKKRKP…YEVMHLQKEI (143 aa)) are interaction with CSF1R. Residues 2 to 199 (SSESSKKRKP…RLDWELEQRK (198 aa)) are interaction with THOC7. A phosphoserine mark is found at serine 5 and serine 6. The short motif at 7 to 10 (KKRK) is the Nuclear localization signal element. Basic and acidic residues predominate over residues 22-42 (EGKRNRSDTEQEGKYYSEEAE). The stretch at 81 to 247 (AIEIEERRIQ…QASLPVQEYL (167 aa)) forms a coiled coil. A Glycyl lysine isopeptide (Lys-Gly) (interchain with G-Cter in SUMO2) cross-link involves residue lysine 153. Residue tyrosine 225 is modified to Phosphotyrosine; by SRC. Residues 247–683 (LFMPFDQAHK…NHPQGFFSHR (437 aa)) form a tandem RWD domains region. The interval 301–336 (FKPPEDSQDDESDSDAEEEQTTKRRRPTLGVQLDDK) is disordered. Residues 306–319 (DSQDDESDSDAEEE) are compositionally biased toward acidic residues. 3 positions are modified to phosphoserine: serine 307, serine 312, and serine 314. Threonine 328 is modified (phosphothreonine).

The protein belongs to the THOC5 family. As to quaternary structure, component of the THO subcomplex, which is composed of THOC1, THOC2, THOC3, THOC5, THOC6 and THOC7. The THO subcomplex interacts with DDX39B to form the THO-DDX39B complex which multimerizes into a 28-subunit tetrameric assembly. Component of the transcription/export (TREX) complex at least composed of ALYREF/THOC4, DDX39B, SARNP/CIP29, CHTOP and the THO subcomplex; in the complex interacts with THOC1, THOC2, THOC5, THOC6 and THOC7; forms a coiled-coil dimer with THOC7; together with THOC6 and THOC7, plays a key structural role in oligomerization of the THO-DDX39B complex. TREX seems to have a dynamic structure involving ATP-dependent remodeling. Interacts with phosphorylated CSF1R. Interacts (via N-terminus) with the NTF2 domain of NXF1. Forms a complex with CEBPB. Interacts with CPSF6; indicative for an association with the cleavage factor Im (CFIm) complex. Interacts with LUZP4. Interacts with NCBP3. Post-translationally, phosphorylated on tyrosine upon binding to activated CSF1R; which causes a dissociation of the two proteins. Phosphorylation on Ser-5 and/or Ser-6 is required for nuclear export. Phosphorylated on Thr-328 in insulin-stimulated adipocytes. Phosphorylation at Tyr-225 modulates mRNA binding. As to expression, ubiquitously expressed.

Its subcellular location is the nucleus. The protein localises to the cytoplasm. Its function is as follows. Component of the THO subcomplex of the TREX complex which is thought to couple mRNA transcription, processing and nuclear export, and which specifically associates with spliced mRNA and not with unspliced pre-mRNA. Plays a key structural role in the oligomerization of the THO-DDX39B complex. TREX is recruited to spliced mRNAs by a transcription-independent mechanism, binds to mRNA upstream of the exon-junction complex (EJC) and is recruited in a splicing- and cap-dependent manner to a region near the 5' end of the mRNA where it functions in mRNA export to the cytoplasm via the TAP/NXF1 pathway. THOC5 in conjunction with ALYREF/THOC4 functions in NXF1-NXT1 mediated nuclear export of HSP70 mRNA; both proteins enhance the RNA binding activity of NXF1 and are required for NXF1 localization to the nuclear rim. Involved in transcription elongation and genome stability. Involved in alternative polyadenylation site choice by recruiting CPSF6 to 5' region of target genes; probably mediates association of the TREX and CFIm complexes. Functionally, regulates the expression of myeloid transcription factors CEBPA, CEBPB and GAB2 by enhancing the levels of phosphatidylinositol 3,4,5-trisphosphate. May be involved in the differentiation of granulocytes and adipocytes. Essential for hematopoietic primitive cell survival and plays an integral role in monocytic development. (Microbial infection) The TREX complex is essential for the export of Kaposi's sarcoma-associated herpesvirus (KSHV) intronless mRNAs and infectious virus production. The polypeptide is THO complex subunit 5 (THOC5) (Homo sapiens (Human)).